A 251-amino-acid chain; its full sequence is ATP synthase subunit a (251 aa).

The next 6 membrane-spanning stretches (helical) occupy residues 30–50 (NSNEMMLLAAVIVTSLFVVAL), 86–106 (FFPFVFTLFAFILIGNILGLF), 116–136 (IAITGALALFVFALSTLVGFW), 145–165 (FFSPPGVPGWLLPLLIPIEIV), 195–215 (FMLMLVSGLGAVGVVAAIIPL), and 219–239 (IALTALEFLVAFLQAYVFAIL).

This sequence belongs to the ATPase A chain family. F-type ATPases have 2 components, CF(1) - the catalytic core - and CF(0) - the membrane proton channel. CF(1) has five subunits: alpha(3), beta(3), gamma(1), delta(1), epsilon(1). CF(0) has three main subunits: a(1), b(2) and c(9-12). The alpha and beta chains form an alternating ring which encloses part of the gamma chain. CF(1) is attached to CF(0) by a central stalk formed by the gamma and epsilon chains, while a peripheral stalk is formed by the delta and b chains.

The protein localises to the cell inner membrane. Key component of the proton channel; it plays a direct role in the translocation of protons across the membrane. The protein is ATP synthase subunit a of Acidiphilium cryptum (strain JF-5).